Here is a 245-residue protein sequence, read N- to C-terminus: Protein-glutamine gamma-glutamyltransferase (245 aa).

This sequence belongs to the bacillus TGase family.

It catalyses the reaction L-glutaminyl-[protein] + L-lysyl-[protein] = [protein]-L-lysyl-N(6)-5-L-glutamyl-[protein] + NH4(+). In terms of biological role, probably plays a role in the assembly of the spore coat proteins by catalyzing epsilon-(gamma-glutamyl)lysine cross-links. In wild-type spores at 37 degrees Celsius, tgl mediates the cross-linking of GerQ in higher molecular mass forms, probably in cooperation with YabG. This chain is Protein-glutamine gamma-glutamyltransferase (tgl), found in Bacillus subtilis (strain 168).